Consider the following 128-residue polypeptide: Large ribosomal subunit protein bL20 (128 aa).

Belongs to the bacterial ribosomal protein bL20 family.

Functionally, binds directly to 23S ribosomal RNA and is necessary for the in vitro assembly process of the 50S ribosomal subunit. It is not involved in the protein synthesizing functions of that subunit. This chain is Large ribosomal subunit protein bL20, found in Corynebacterium efficiens (strain DSM 44549 / YS-314 / AJ 12310 / JCM 11189 / NBRC 100395).